A 131-amino-acid chain; its full sequence is Keratin, high-sulfur matrix protein, IIIA3 (131 aa).

As to expression, wool.

Functionally, the keratin products of mammalian epidermal derivatives such as wool and hair consist of microfibrils embedded in a rigid matrix of other proteins. The matrix proteins include the high-sulfur and high-tyrosine keratins, having molecular weights of 6-20 kDa, whereas the microfibrils contain the larger, low-sulfur keratins (40-56 kDa). This is Keratin, high-sulfur matrix protein, IIIA3 from Ovis aries (Sheep).